Consider the following 115-residue polypeptide: Ig heavy chain V-III region J606 (115 aa).

Residues 1-114 enclose the Ig-like domain; sequence EVKLEESGGG…WGQGTLVTVS (114 aa). Cys22 and Cys98 are disulfide-bonded.

In Mus musculus (Mouse), this protein is Ig heavy chain V-III region J606.